Here is a 354-residue protein sequence, read N- to C-terminus: Probable dual-specificity RNA methyltransferase RlmN (354 aa).

The active-site Proton acceptor is the Glu-94. The Radical SAM core domain maps to 103–332 (GRRRNTACLS…QEAGLEAAIR (230 aa)). Cysteines 110 and 343 form a disulfide. 3 residues coordinate [4Fe-4S] cluster: Cys-117, Cys-121, and Cys-124. Residues 169–170 (GE), Ser-201, 224–226 (SLH), and Asn-300 each bind S-adenosyl-L-methionine. Cys-343 (S-methylcysteine intermediate) is an active-site residue.

The protein belongs to the radical SAM superfamily. RlmN family. Requires [4Fe-4S] cluster as cofactor.

Its subcellular location is the cytoplasm. It carries out the reaction adenosine(2503) in 23S rRNA + 2 reduced [2Fe-2S]-[ferredoxin] + 2 S-adenosyl-L-methionine = 2-methyladenosine(2503) in 23S rRNA + 5'-deoxyadenosine + L-methionine + 2 oxidized [2Fe-2S]-[ferredoxin] + S-adenosyl-L-homocysteine. It catalyses the reaction adenosine(37) in tRNA + 2 reduced [2Fe-2S]-[ferredoxin] + 2 S-adenosyl-L-methionine = 2-methyladenosine(37) in tRNA + 5'-deoxyadenosine + L-methionine + 2 oxidized [2Fe-2S]-[ferredoxin] + S-adenosyl-L-homocysteine. Specifically methylates position 2 of adenine 2503 in 23S rRNA and position 2 of adenine 37 in tRNAs. The chain is Probable dual-specificity RNA methyltransferase RlmN from Moorella thermoacetica (strain ATCC 39073 / JCM 9320).